A 345-amino-acid polypeptide reads, in one-letter code: D(2) dopamine receptor B (345 aa).

Residues 1–10 (EWRFSRIHCD) lie on the Extracellular side of the membrane. A disulfide bond links Cys-9 and Cys-84. Residues 11–32 (IFVTLDVMMCTASILNLCAISI) traverse the membrane as a helical segment. At 33–53 (DRYTAVAMPMLYNTRYSSKRR) the chain is on the cytoplasmic side. Residues 54 to 74 (VTVMISVVWVLSFAISCPLLF) traverse the membrane as a helical segment. Over 75 to 90 (GLNNTASTVCIIDNPA) the chain is Extracellular. N-linked (GlcNAc...) asparagine glycosylation occurs at Asn-77. Residues 91 to 115 (FVIYSSIVSFYVPFIVTLLVYVQIY) form a helical membrane-spanning segment. At 116-275 (IVLRKRRKRV…SQHKEKKATQ (160 aa)) the chain is on the cytoplasmic side. Over residues 166 to 177 (KKKVEAGNHPED) the composition is skewed to basic and acidic residues. Residues 166–199 (KKKVEAGNHPEDMEMEMMSSTSPPEKTKHKSASP) are disordered. The chain crosses the membrane as a helical span at residues 276–297 (MLAIVLGVFIICWLPFFITHIL). The Extracellular segment spans residues 298 to 311 (NMHCNCNIPQALYS). Residues Cys-301 and Cys-303 are joined by a disulfide bond. Residues 312–333 (AFTWLGYVNSAVNPIIYTTFNV) form a helical membrane-spanning segment. At 334–345 (EFRKAFIKILHC) the chain is on the cytoplasmic side. Cys-345 carries S-palmitoyl cysteine lipidation.

It belongs to the G-protein coupled receptor 1 family. Post-translationally, palmitoylated. Palmitoylation is probably required for proper localization to the plasma membrane and stability of the receptor. Brain; pituitary.

The protein localises to the cell membrane. Its subcellular location is the golgi apparatus membrane. Functionally, this is one of the five types (D1 to D5) of receptors for dopamine. The activity of this receptor is mediated by G proteins which inhibits adenylyl cyclase. In Xenopus D2R is involved in the regulation of the melanotrope cells of the intermediate pituitary during background adaptation of the animal. The polypeptide is D(2) dopamine receptor B (drd2-b) (Xenopus laevis (African clawed frog)).